The primary structure comprises 176 residues: Outer membrane protein assembly factor BamE (176 aa).

The N-terminal stretch at 1 to 21 (MQNAKLMLTCLAFAGLAALAG) is a signal peptide. Residue C22 is the site of N-palmitoyl cysteine attachment. C22 carries the S-diacylglycerol cysteine lipid modification. Residues 121–176 (KEGSTTVTQPADQQKPEAQKEEPPKPGSTLEQLQREVDEAQPVPVPTPEPLDPSPQ) form a disordered region. Residues 123 to 132 (GSTTVTQPAD) are compositionally biased toward polar residues. The span at 134-144 (QKPEAQKEEPP) shows a compositional bias: basic and acidic residues. Residues 163–176 (VPVPTPEPLDPSPQ) are compositionally biased toward pro residues.

It belongs to the BamE family. Part of the Bam complex.

It is found in the cell outer membrane. In terms of biological role, part of the outer membrane protein assembly complex, which is involved in assembly and insertion of beta-barrel proteins into the outer membrane. May have a structural role in maintaining the cell envelope integrity. This chain is Outer membrane protein assembly factor BamE, found in Pseudomonas aeruginosa (strain ATCC 15692 / DSM 22644 / CIP 104116 / JCM 14847 / LMG 12228 / 1C / PRS 101 / PAO1).